The sequence spans 237 residues: Methylosome subunit pICln (237 aa).

Position 2 is an N-acetylserine (S2). 6 positions are modified to phosphoserine: S102, S144, S193, S195, S198, and S210. The disordered stretch occupies residues L135 to Q159. Over residues P139–D153 the composition is skewed to acidic residues. T223 is modified (phosphothreonine).

The protein belongs to the pICln (TC 1.A.47) family. As to quaternary structure, component of the methylosome, a 20S complex containing at least PRMT5/SKB1, WDR77/MEP50 and CLNS1A/pICln. May mediate SNRPD1 and SNRPD3 methylation. Forms a 6S pICln-Sm complex composed of CLNS1A/pICln, SNRPD1, SNRPD2, SNRPE, SNRPF and SNRPG; ring-like structure where CLNS1A/pICln mimics additional Sm proteins and which is unable to assemble into the core snRNP. Interacts with LSM10 and LSM11.

Its subcellular location is the cytoplasm. The protein localises to the cytosol. It localises to the nucleus. The protein resides in the cytoskeleton. Functionally, involved in both the assembly of spliceosomal snRNPs and the methylation of Sm proteins. Chaperone that regulates the assembly of spliceosomal U1, U2, U4 and U5 small nuclear ribonucleoproteins (snRNPs), the building blocks of the spliceosome, and thereby plays an important role in the splicing of cellular pre-mRNAs. Most spliceosomal snRNPs contain a common set of Sm proteins SNRPB, SNRPD1, SNRPD2, SNRPD3, SNRPE, SNRPF and SNRPG that assemble in a heptameric protein ring on the Sm site of the small nuclear RNA to form the core snRNP (Sm core). In the cytosol, the Sm proteins SNRPD1, SNRPD2, SNRPE, SNRPF and SNRPG are trapped in an inactive 6S pICln-Sm complex by the chaperone CLNS1A that controls the assembly of the core snRNP. Dissociation by the SMN complex of CLNS1A from the trapped Sm proteins and their transfer to an SMN-Sm complex triggers the assembly of core snRNPs and their transport to the nucleus. In Homo sapiens (Human), this protein is Methylosome subunit pICln (CLNS1A).